Here is a 75-residue protein sequence, read N- to C-terminus: Sec-independent protein translocase protein TatA (75 aa).

Residues 1-21 (MGMPSMPELLIVLAIVVLLFG) traverse the membrane as a helical segment. The disordered stretch occupies residues 47 to 75 (DEEEEVKEITKKEEPKVEAAAEEKKSENA). Residues 53–75 (KEITKKEEPKVEAAAEEKKSENA) are compositionally biased toward basic and acidic residues.

This sequence belongs to the TatA/E family. As to quaternary structure, the Tat system comprises two distinct complexes: a TatABC complex, containing multiple copies of TatA, TatB and TatC subunits, and a separate TatA complex, containing only TatA subunits. Substrates initially bind to the TatABC complex, which probably triggers association of the separate TatA complex to form the active translocon.

The protein resides in the cell inner membrane. Functionally, part of the twin-arginine translocation (Tat) system that transports large folded proteins containing a characteristic twin-arginine motif in their signal peptide across membranes. TatA could form the protein-conducting channel of the Tat system. The protein is Sec-independent protein translocase protein TatA of Sulfurovum sp. (strain NBC37-1).